The following is a 275-amino-acid chain: Phosphonoacetaldehyde hydrolase (275 aa).

Asp-15 serves as the catalytic Nucleophile. Positions 15 and 17 each coordinate Mg(2+). The active-site Schiff-base intermediate with substrate is Lys-56. Asp-189 contributes to the Mg(2+) binding site.

The protein belongs to the HAD-like hydrolase superfamily. PhnX family. In terms of assembly, homodimer. Mg(2+) is required as a cofactor.

It catalyses the reaction phosphonoacetaldehyde + H2O = acetaldehyde + phosphate + H(+). Involved in phosphonate degradation. This is Phosphonoacetaldehyde hydrolase from Pseudomonas aeruginosa (strain UCBPP-PA14).